The following is a 159-amino-acid chain: 2-C-methyl-D-erythritol 2,4-cyclodiphosphate synthase (159 aa).

Aspartate 10 and histidine 12 together coordinate a divalent metal cation. Residues aspartate 10–histidine 12 and histidine 36–serine 37 contribute to the 4-CDP-2-C-methyl-D-erythritol 2-phosphate site. Histidine 44 lines the a divalent metal cation pocket. Residues aspartate 58–glycine 60, threonine 134–glutamate 137, phenylalanine 141, and arginine 144 contribute to the 4-CDP-2-C-methyl-D-erythritol 2-phosphate site.

It belongs to the IspF family. In terms of assembly, homotrimer. A divalent metal cation serves as cofactor.

The catalysed reaction is 4-CDP-2-C-methyl-D-erythritol 2-phosphate = 2-C-methyl-D-erythritol 2,4-cyclic diphosphate + CMP. It functions in the pathway isoprenoid biosynthesis; isopentenyl diphosphate biosynthesis via DXP pathway; isopentenyl diphosphate from 1-deoxy-D-xylulose 5-phosphate: step 4/6. Involved in the biosynthesis of isopentenyl diphosphate (IPP) and dimethylallyl diphosphate (DMAPP), two major building blocks of isoprenoid compounds. Catalyzes the conversion of 4-diphosphocytidyl-2-C-methyl-D-erythritol 2-phosphate (CDP-ME2P) to 2-C-methyl-D-erythritol 2,4-cyclodiphosphate (ME-CPP) with a corresponding release of cytidine 5-monophosphate (CMP). The protein is 2-C-methyl-D-erythritol 2,4-cyclodiphosphate synthase of Bacteroides thetaiotaomicron (strain ATCC 29148 / DSM 2079 / JCM 5827 / CCUG 10774 / NCTC 10582 / VPI-5482 / E50).